The sequence spans 409 residues: Arginine deiminase (409 aa).

Catalysis depends on C397, which acts as the Amidino-cysteine intermediate.

It belongs to the arginine deiminase family.

The protein localises to the cytoplasm. The enzyme catalyses L-arginine + H2O = L-citrulline + NH4(+). Its pathway is amino-acid degradation; L-arginine degradation via ADI pathway; carbamoyl phosphate from L-arginine: step 1/2. This is Arginine deiminase (arcA) from Metamycoplasma hominis (Mycoplasma hominis).